Here is a 149-residue protein sequence, read N- to C-terminus: 3-dehydroquinate dehydratase (149 aa).

The active-site Proton acceptor is Tyr-26. Residues Asn-77, His-83, and Asp-90 each contribute to the substrate site. Catalysis depends on His-103, which acts as the Proton donor. Substrate-binding positions include 104–105 (LS) and Arg-114.

It belongs to the type-II 3-dehydroquinase family. In terms of assembly, homododecamer.

The enzyme catalyses 3-dehydroquinate = 3-dehydroshikimate + H2O. It functions in the pathway metabolic intermediate biosynthesis; chorismate biosynthesis; chorismate from D-erythrose 4-phosphate and phosphoenolpyruvate: step 3/7. In terms of biological role, catalyzes a trans-dehydration via an enolate intermediate. In Aliivibrio fischeri (strain MJ11) (Vibrio fischeri), this protein is 3-dehydroquinate dehydratase.